The following is a 179-amino-acid chain: Large ribosomal subunit protein uL5 (179 aa).

It belongs to the universal ribosomal protein uL5 family. Part of the 50S ribosomal subunit; part of the 5S rRNA/L5/L18/L25 subcomplex. Contacts the 5S rRNA and the P site tRNA. Forms a bridge to the 30S subunit in the 70S ribosome.

This is one of the proteins that bind and probably mediate the attachment of the 5S RNA into the large ribosomal subunit, where it forms part of the central protuberance. In the 70S ribosome it contacts protein S13 of the 30S subunit (bridge B1b), connecting the 2 subunits; this bridge is implicated in subunit movement. Contacts the P site tRNA; the 5S rRNA and some of its associated proteins might help stabilize positioning of ribosome-bound tRNAs. In Lachnoclostridium phytofermentans (strain ATCC 700394 / DSM 18823 / ISDg) (Clostridium phytofermentans), this protein is Large ribosomal subunit protein uL5.